We begin with the raw amino-acid sequence, 136 residues long: Small ribosomal subunit protein uS9 (136 aa).

Belongs to the universal ribosomal protein uS9 family.

The protein is Small ribosomal subunit protein uS9 of Borrelia hermsii (strain HS1 / DAH).